The sequence spans 478 residues: Protein nucleotidyltransferase YdiU (478 aa).

ATP contacts are provided by G84, G86, R87, K107, D119, G120, R170, and R177. D246 acts as the Proton acceptor in catalysis. N247 and D256 together coordinate Mg(2+). Residue D256 participates in ATP binding.

The protein belongs to the SELO family. Mg(2+) serves as cofactor. Mn(2+) is required as a cofactor.

The enzyme catalyses L-seryl-[protein] + ATP = 3-O-(5'-adenylyl)-L-seryl-[protein] + diphosphate. The catalysed reaction is L-threonyl-[protein] + ATP = 3-O-(5'-adenylyl)-L-threonyl-[protein] + diphosphate. It carries out the reaction L-tyrosyl-[protein] + ATP = O-(5'-adenylyl)-L-tyrosyl-[protein] + diphosphate. It catalyses the reaction L-histidyl-[protein] + UTP = N(tele)-(5'-uridylyl)-L-histidyl-[protein] + diphosphate. The enzyme catalyses L-seryl-[protein] + UTP = O-(5'-uridylyl)-L-seryl-[protein] + diphosphate. The catalysed reaction is L-tyrosyl-[protein] + UTP = O-(5'-uridylyl)-L-tyrosyl-[protein] + diphosphate. Its function is as follows. Nucleotidyltransferase involved in the post-translational modification of proteins. It can catalyze the addition of adenosine monophosphate (AMP) or uridine monophosphate (UMP) to a protein, resulting in modifications known as AMPylation and UMPylation. In Escherichia coli (strain ATCC 8739 / DSM 1576 / NBRC 3972 / NCIMB 8545 / WDCM 00012 / Crooks), this protein is Protein nucleotidyltransferase YdiU.